Reading from the N-terminus, the 156-residue chain is Ribosomal RNA large subunit methyltransferase H (156 aa).

S-adenosyl-L-methionine-binding positions include leucine 74, glycine 105, and leucine 124 to leucine 129.

It belongs to the RNA methyltransferase RlmH family. As to quaternary structure, homodimer.

Its subcellular location is the cytoplasm. The enzyme catalyses pseudouridine(1915) in 23S rRNA + S-adenosyl-L-methionine = N(3)-methylpseudouridine(1915) in 23S rRNA + S-adenosyl-L-homocysteine + H(+). Functionally, specifically methylates the pseudouridine at position 1915 (m3Psi1915) in 23S rRNA. The chain is Ribosomal RNA large subunit methyltransferase H from Legionella pneumophila (strain Lens).